The following is a 223-amino-acid chain: Riboflavin kinase (223 aa).

The tract at residues 1–89 is unknown; the sequence is MHRINALKHL…KHIFCGDEDK (89 aa). Residues 90-223 form a riboflavin kinase region; it reads VELYGNVITG…IMIEDRSACE (134 aa). 99 to 104 is a CDP binding site; the sequence is GLGEGQ. The Mg(2+) site is built by Thr128 and Asn130. The FMN site is built by Ser185 and Glu193. 198 to 201 contributes to the CDP binding site; that stretch reads VHLR.

Belongs to the archaeal riboflavin kinase family. It depends on Mg(2+) as a cofactor.

The catalysed reaction is riboflavin + CTP = CDP + FMN + H(+). The protein operates within cofactor biosynthesis; FMN biosynthesis; FMN from riboflavin (CTP route): step 1/1. Catalyzes the CTP-dependent phosphorylation of riboflavin (vitamin B2) to form flavin mononucleotide (FMN). In Methanococcoides burtonii (strain DSM 6242 / NBRC 107633 / OCM 468 / ACE-M), this protein is Riboflavin kinase (ribK).